The chain runs to 263 residues: UPF0328 protein ECU08_2060 (263 aa).

It belongs to the UPF0328 family.

This is UPF0328 protein ECU08_2060 from Encephalitozoon cuniculi (strain GB-M1) (Microsporidian parasite).